The chain runs to 215 residues: Phosphatidylserine decarboxylase proenzyme (215 aa).

The active-site Schiff-base intermediate with substrate; via pyruvic acid is the serine 181. A Pyruvic acid (Ser); by autocatalysis modification is found at serine 181.

Belongs to the phosphatidylserine decarboxylase family. PSD-A subfamily. As to quaternary structure, heterodimer of a large membrane-associated beta subunit and a small pyruvoyl-containing alpha subunit. It depends on pyruvate as a cofactor. Post-translationally, is synthesized initially as an inactive proenzyme. Formation of the active enzyme involves a self-maturation process in which the active site pyruvoyl group is generated from an internal serine residue via an autocatalytic post-translational modification. Two non-identical subunits are generated from the proenzyme in this reaction, and the pyruvate is formed at the N-terminus of the alpha chain, which is derived from the carboxyl end of the proenzyme. The post-translation cleavage follows an unusual pathway, termed non-hydrolytic serinolysis, in which the side chain hydroxyl group of the serine supplies its oxygen atom to form the C-terminus of the beta chain, while the remainder of the serine residue undergoes an oxidative deamination to produce ammonia and the pyruvoyl prosthetic group on the alpha chain.

It localises to the cell membrane. It carries out the reaction a 1,2-diacyl-sn-glycero-3-phospho-L-serine + H(+) = a 1,2-diacyl-sn-glycero-3-phosphoethanolamine + CO2. Its pathway is phospholipid metabolism; phosphatidylethanolamine biosynthesis; phosphatidylethanolamine from CDP-diacylglycerol: step 2/2. Its function is as follows. Catalyzes the formation of phosphatidylethanolamine (PtdEtn) from phosphatidylserine (PtdSer). This chain is Phosphatidylserine decarboxylase proenzyme, found in Polynucleobacter asymbioticus (strain DSM 18221 / CIP 109841 / QLW-P1DMWA-1) (Polynucleobacter necessarius subsp. asymbioticus).